Reading from the N-terminus, the 206-residue chain is MAAARASLGRILPESSILFLCDLQEKFRPSIAYFPQIVSVAARMLKVARLLDVPILLTEQYPEGLGPTVPELGAQGIRPVSKTCFSMVPALQKELDGRSQLQSVLLCGIETQACILNTALDLLHRGLQVHVVVDACSSRSQVDRLVALARMRQSGAFLATSESLILQLVRDASHPQFKEIQKIIKEPVPDSGLLSLFQGQSPLTSC.

Lys26 is subject to N6-succinyllysine. N6-acetyllysine; alternate is present on residues Lys93 and Lys178. 2 positions are modified to N6-succinyllysine; alternate: Lys93 and Lys178. Lys182 and Lys185 each carry N6-acetyllysine.

The protein belongs to the isochorismatase family. Interacts with CDKN2A. Ubiquitous. Expressed predominantly in uterus, stomach and urinary tract.

The protein resides in the cytoplasm. It is found in the nucleus. This chain is Isochorismatase domain-containing protein 2A, found in Mus musculus (Mouse).